The chain runs to 223 residues: Holliday junction branch migration complex subunit RuvA (223 aa).

A domain I region spans residues 1–67 (MIGWLKGEKI…EDGSNLFGFI (67 aa)). A domain II region spans residues 68 to 146 (EKSERDLFRK…DFDLNNEFSP (79 aa)). The tract at residues 147 to 157 (PTKLRPESAED) is flexible linker. Positions 158 to 223 (LNEELLTEIK…FKQALITLNK (66 aa)) are domain III.

Belongs to the RuvA family. As to quaternary structure, homotetramer. Forms an RuvA(8)-RuvB(12)-Holliday junction (HJ) complex. HJ DNA is sandwiched between 2 RuvA tetramers; dsDNA enters through RuvA and exits via RuvB. An RuvB hexamer assembles on each DNA strand where it exits the tetramer. Each RuvB hexamer is contacted by two RuvA subunits (via domain III) on 2 adjacent RuvB subunits; this complex drives branch migration. In the full resolvosome a probable DNA-RuvA(4)-RuvB(12)-RuvC(2) complex forms which resolves the HJ.

The protein resides in the cytoplasm. In terms of biological role, the RuvA-RuvB-RuvC complex processes Holliday junction (HJ) DNA during genetic recombination and DNA repair, while the RuvA-RuvB complex plays an important role in the rescue of blocked DNA replication forks via replication fork reversal (RFR). RuvA specifically binds to HJ cruciform DNA, conferring on it an open structure. The RuvB hexamer acts as an ATP-dependent pump, pulling dsDNA into and through the RuvAB complex. HJ branch migration allows RuvC to scan DNA until it finds its consensus sequence, where it cleaves and resolves the cruciform DNA. This Prochlorococcus marinus (strain MIT 9211) protein is Holliday junction branch migration complex subunit RuvA.